A 196-amino-acid chain; its full sequence is Holliday junction branch migration complex subunit RuvA (196 aa).

The segment at 1–63 is domain I; that stretch reads MINKICGKIV…EDEIRLFGFL (63 aa). Positions 64–135 are domain II; that stretch reads NVSEREVFEK…KLRGKLVKVN (72 aa). Positions 135–138 are flexible linker; that stretch reads NEAS. The interval 139 to 196 is domain III; sequence SGVLKFKELEQSIVNMGFDRKLVAAAIKEIMLIDEFLMLRQVDQEQFLFREILRKLSG.

The protein belongs to the RuvA family. In terms of assembly, homotetramer. Forms an RuvA(8)-RuvB(12)-Holliday junction (HJ) complex. HJ DNA is sandwiched between 2 RuvA tetramers; dsDNA enters through RuvA and exits via RuvB. An RuvB hexamer assembles on each DNA strand where it exits the tetramer. Each RuvB hexamer is contacted by two RuvA subunits (via domain III) on 2 adjacent RuvB subunits; this complex drives branch migration. In the full resolvosome a probable DNA-RuvA(4)-RuvB(12)-RuvC(2) complex forms which resolves the HJ.

It localises to the cytoplasm. The RuvA-RuvB-RuvC complex processes Holliday junction (HJ) DNA during genetic recombination and DNA repair, while the RuvA-RuvB complex plays an important role in the rescue of blocked DNA replication forks via replication fork reversal (RFR). RuvA specifically binds to HJ cruciform DNA, conferring on it an open structure. The RuvB hexamer acts as an ATP-dependent pump, pulling dsDNA into and through the RuvAB complex. HJ branch migration allows RuvC to scan DNA until it finds its consensus sequence, where it cleaves and resolves the cruciform DNA. In Borrelia turicatae (strain 91E135), this protein is Holliday junction branch migration complex subunit RuvA.